Here is a 331-residue protein sequence, read N- to C-terminus: ATP-dependent 6-phosphofructokinase (331 aa).

An ATP-binding site is contributed by Gly12. Residues 22–26 and 55–60 each bind ADP; these read RGVVR and RYSVSD. Residues 73-74 and 103-106 each bind ATP; these read RF and GDGS. Residue Asp104 participates in Mg(2+) binding. 127–129 lines the substrate pocket; it reads TID. Asp129 (proton acceptor) is an active-site residue. Arg156 serves as a coordination point for ADP. Substrate-binding positions include Arg164 and 171-173; that span reads MGR. Residues 187–189, Lys213, and 215–217 contribute to the ADP site; these read GCE and KKH. Residues Glu224, Arg245, and 251-254 contribute to the substrate site; that span reads HIQR.

It belongs to the phosphofructokinase type A (PFKA) family. ATP-dependent PFK group I subfamily. Prokaryotic clade 'B1' sub-subfamily. As to quaternary structure, homotetramer. The cofactor is Mg(2+).

The protein localises to the cytoplasm. The catalysed reaction is beta-D-fructose 6-phosphate + ATP = beta-D-fructose 1,6-bisphosphate + ADP + H(+). The protein operates within carbohydrate degradation; glycolysis; D-glyceraldehyde 3-phosphate and glycerone phosphate from D-glucose: step 3/4. With respect to regulation, allosterically activated by ADP and other diphosphonucleosides, and allosterically inhibited by phosphoenolpyruvate. In terms of biological role, catalyzes the phosphorylation of D-fructose 6-phosphate to fructose 1,6-bisphosphate by ATP, the first committing step of glycolysis. The polypeptide is ATP-dependent 6-phosphofructokinase (Yersinia enterocolitica serotype O:8 / biotype 1B (strain NCTC 13174 / 8081)).